Consider the following 180-residue polypeptide: NADH-quinone oxidoreductase subunit I (180 aa).

2 consecutive 4Fe-4S ferredoxin-type domains span residues 50–80 (LTRD…LQKT) and 90–119 (EFFR…LTPD). [4Fe-4S] cluster-binding residues include C60, C63, C66, C70, C99, C102, C105, and C109.

Belongs to the complex I 23 kDa subunit family. In terms of assembly, NDH-1 is composed of 13 different subunits. Subunits NuoA, H, J, K, L, M, N constitute the membrane sector of the complex. [4Fe-4S] cluster serves as cofactor.

It localises to the cell inner membrane. The catalysed reaction is a quinone + NADH + 5 H(+)(in) = a quinol + NAD(+) + 4 H(+)(out). NDH-1 shuttles electrons from NADH, via FMN and iron-sulfur (Fe-S) centers, to quinones in the respiratory chain. The immediate electron acceptor for the enzyme in this species is believed to be ubiquinone. Couples the redox reaction to proton translocation (for every two electrons transferred, four hydrogen ions are translocated across the cytoplasmic membrane), and thus conserves the redox energy in a proton gradient. This is NADH-quinone oxidoreductase subunit I from Shigella dysenteriae serotype 1 (strain Sd197).